The chain runs to 132 residues: Small ribosomal subunit protein uS8 (132 aa).

It belongs to the universal ribosomal protein uS8 family. In terms of assembly, part of the 30S ribosomal subunit. Contacts proteins S5 and S12.

Functionally, one of the primary rRNA binding proteins, it binds directly to 16S rRNA central domain where it helps coordinate assembly of the platform of the 30S subunit. The chain is Small ribosomal subunit protein uS8 from Xanthomonas axonopodis pv. citri (strain 306).